A 416-amino-acid chain; its full sequence is MTDMRRLGQRAKQASLLIAPLSTQIKNRFLSTLAKVLVDDTQTLLAANQKDLANAKEHGISDIMMDRLRLTSERIKAIAQGVQQVADLADPIGQVIKGYTNLNGLKILQKRVPLGVIAMIFESRPNVSVDAFSLAFKTNNAIILRGGKDALYSNKALVKLIRQSLEESGITPDAVQLVEDPSHAVAEELMQATDYVDVLIPRGGARLIQTVKEKAKVPVIETGVGNVHIYVDAQADLDMATKIVINAKTKRPSVCNAAEGLVIHEAVAARFIPMLEKAINQVQPVEWRADDKALPLFEQAVPAKAEDFETEFLDYIMSVKVVSSLEEAISWINQHTSHHSEAIITRDIKAAETFQDLVDAAAVYVNASTRFTDGFVFGLGAEIGISTQKMHARGPMGLEALTSTKFYINGDGHIRE.

Belongs to the gamma-glutamyl phosphate reductase family.

The protein localises to the cytoplasm. The enzyme catalyses L-glutamate 5-semialdehyde + phosphate + NADP(+) = L-glutamyl 5-phosphate + NADPH + H(+). It participates in amino-acid biosynthesis; L-proline biosynthesis; L-glutamate 5-semialdehyde from L-glutamate: step 2/2. Catalyzes the NADPH-dependent reduction of L-glutamate 5-phosphate into L-glutamate 5-semialdehyde and phosphate. The product spontaneously undergoes cyclization to form 1-pyrroline-5-carboxylate. The polypeptide is Gamma-glutamyl phosphate reductase (Streptococcus pyogenes serotype M4 (strain MGAS10750)).